A 672-amino-acid polypeptide reads, in one-letter code: Iron-phytosiderophore transporter YSL15 (672 aa).

The span at 1-11 (MEHADADRTRV) shows a compositional bias: basic and acidic residues. Residues 1-27 (MEHADADRTRVAPEIGSLHDEDAEADP) form a disordered region. Helical transmembrane passes span 47–67 (GVVA…KIAL), 70–90 (GLVP…LRGW), 115–135 (CAVA…LLGL), 158–178 (GIGW…LSLI), 218–238 (LHGF…QWFY), 279–299 (LVNL…WPLI), 325–345 (FLCI…VTGV), 390–410 (MAYS…PIMF), 418–438 (VIIA…GAGL), 450–470 (IALF…AGLV), 504–524 (VGEL…FMLF), 556–576 (ISAL…FAVL), 602–622 (FLVG…LFAW), and 630–650 (AAFM…IWTF).

The protein belongs to the YSL (TC 2.A.67.2) family. Expressed in root phloem and at low levels in the shoot companion cells.

It localises to the cell membrane. Its function is as follows. Involved in Fe(3+) uptake from the rhizosphere and phloem transport of iron. Plays an important role in iron homeostasis during the early stages of growth. Transports Fe(3+)-phytosiderophore, but not Fe(3+)- or Fe(2+)-nicotianamine. May not transport other chelated metals. This chain is Iron-phytosiderophore transporter YSL15 (YSL15), found in Oryza sativa subsp. japonica (Rice).